We begin with the raw amino-acid sequence, 243 residues long: Vesicle-associated membrane protein-associated protein B (243 aa).

Residue A2 is modified to N-acetylalanine. Over 2–218 (AKVEQVLSLE…AALAASGKEE (217 aa)) the chain is Cytoplasmic. Residues 7–124 (VLSLEPQHEL…MDSKLRCVFE (118 aa)) form the MSP domain. Residue S146 is modified to Phosphoserine. K147 participates in a covalent cross-link: Glycyl lysine isopeptide (Lys-Gly) (interchain with G-Cter in SUMO1). S159 is modified (phosphoserine). The stretch at 161-196 (LDDAEVKKVMEECRRLQGEVQRLREESRQLKEEDGL) forms a coiled coil. S206 carries the phosphoserine modification. The chain crosses the membrane as a helical; Anchor for type IV membrane protein span at residues 219-239 (GLSARLLALVVLFFIVGVIIG).

Belongs to the VAMP-associated protein (VAP) (TC 9.B.17) family. In terms of assembly, homodimer, and heterodimer with VAPA. Interacts with VAMP1 and VAMP2. Interacts (via MSP domain) with ZFYVE27. Interacts with RMDN3. Interacts with KIF5A in a ZFYVE27-dependent manner. Interacts (via MSP domain) with STARD3 (via phospho-FFAT motif). Interacts with STARD3NL (via FFAT motif). Interacts with CERT1. Interacts with PLEKHA3 and SACM1L to form a ternary complex. Interacts with VPS13A (via FFAT motif). Interacts with RB1CC1 (via phosphorylated FFAT motif), MIGA2 (via phosphorylated FFAT motif), RMDN3 (via phosphorylated FFAT motif), OSBPL1A (via FFAT motif), KCNB1 (via phosphorylated FFAT motif) and KCNB2 (via phosphorylated FFAT motif). Interacts (via MSP domain) with WDR44; the interactions connect the endoplasmic reticulum (ER) with the endosomal tubule. As to expression, ubiquitous.

It localises to the endoplasmic reticulum membrane. Its function is as follows. Endoplasmic reticulum (ER)-anchored protein that mediates the formation of contact sites between the ER and endosomes via interaction with FFAT motif-containing proteins such as STARD3 or WDR44. Interacts with STARD3 in a FFAT motif phosphorylation dependent manner. Via interaction with WDR44 participates in neosynthesized protein export. Participates in the endoplasmic reticulum unfolded protein response (UPR) by inducing ERN1/IRE1 activity. Involved in cellular calcium homeostasis regulation. In Rattus norvegicus (Rat), this protein is Vesicle-associated membrane protein-associated protein B.